Reading from the N-terminus, the 643-residue chain is Methyl-accepting chemotaxis protein McpA (643 aa).

The chain crosses the membrane as a helical span at residues 24-44; it reads ILLSACGVVVLAFALFTLYND. The 225-residue stretch at 49 to 273 folds into the Cache domain; it reads NTIRQNIEAS…GLPSAQWYIG (225 aa). A helical membrane pass occupies residues 293–313; the sequence is IIAMLIAVAAIAGLLGLLIPV. Residues 312–366 form the HAMP domain; sequence PVLMSPLTTMGRAMRDIAEGEGDLTRRLAVQNKDEFGELATSFNRFVERIHASIS. Positions 371–607 constitute a Methyl-accepting transducer domain; that stretch reads ATRLVHDLSE…SLNLDITQIN (237 aa).

Belongs to the methyl-accepting chemotaxis (MCP) protein family.

The protein localises to the cell membrane. Its function is as follows. Chemotactic-signal transducers respond to changes in the concentration of attractants and repellents in the environment, transduce a signal from the outside to the inside of the cell, and facilitate sensory adaptation through the variation of the level of methylation. McpA is a chemoreceptor that binds to 12 different L-amino acids and mediates chemotaxis toward these amino acids. The protein is Methyl-accepting chemotaxis protein McpA of Pseudomonas putida (strain ATCC 47054 / DSM 6125 / CFBP 8728 / NCIMB 11950 / KT2440).